Here is an 809-residue protein sequence, read N- to C-terminus: G-type lectin S-receptor-like serine/threonine-protein kinase At1g61480 (809 aa).

The N-terminal stretch at 1 to 24 (MGKKRIMFFASLLLITIFLSFSYA) is a signal peptide. Positions 25 to 144 (GITRESPLSI…NSGRTLWESF (120 aa)) constitute a Bulb-type lectin domain. At 25-425 (GITRESPLSI…SELGGNKRNK (401 aa)) the chain is on the extracellular side. N-linked (GlcNAc...) asparagine glycans are attached at residues asparagine 53, asparagine 88, asparagine 94, asparagine 103, asparagine 117, asparagine 134, and asparagine 236. An EGF-like domain is found at 278–314 (PENSCDIYGFCGPFGICVMSVPPKCKCFKGFVPKSIE). Disulfide bonds link cysteine 282–cysteine 294 and cysteine 288–cysteine 302. N-linked (GlcNAc...) asparagine glycans are attached at residues asparagine 320 and asparagine 375. Positions 333–415 (CQGNTNGKTV…GEILSIRLAS (83 aa)) constitute a PAN domain. 2 disulfides stabilise this stretch: cysteine 368-cysteine 389 and cysteine 372-cysteine 378. A helical membrane pass occupies residues 426–446 (IIVASIVSLSLFVILAFAAFC). Residues 447–809 (FLRYKVKHTV…EMTQSVILGR (363 aa)) are Cytoplasmic-facing. The Protein kinase domain occupies 496 to 781 (FSLSNKLGQG…DLTSPKQPTF (286 aa)). ATP contacts are provided by residues 502 to 510 (LGQGGFGSV) and lysine 524. Serine 530 and serine 545 each carry phosphoserine. The segment at 585-602 (RKRLEIDWPKRFNIIEGI) is caM-binding. The Proton acceptor role is filled by aspartate 621. Serine 625 and serine 638 each carry phosphoserine. Threonine 655 bears the Phosphothreonine mark. A phosphoserine mark is found at serine 698 and serine 792.

It belongs to the protein kinase superfamily. Ser/Thr protein kinase family.

The protein resides in the cell membrane. The catalysed reaction is L-seryl-[protein] + ATP = O-phospho-L-seryl-[protein] + ADP + H(+). It catalyses the reaction L-threonyl-[protein] + ATP = O-phospho-L-threonyl-[protein] + ADP + H(+). This Arabidopsis thaliana (Mouse-ear cress) protein is G-type lectin S-receptor-like serine/threonine-protein kinase At1g61480.